Here is a 164-residue protein sequence, read N- to C-terminus: 3-isopropylmalate dehydratase small subunit (164 aa).

It belongs to the LeuD family. LeuD type 2 subfamily. Heterodimer of LeuC and LeuD.

The catalysed reaction is (2R,3S)-3-isopropylmalate = (2S)-2-isopropylmalate. It participates in amino-acid biosynthesis; L-leucine biosynthesis; L-leucine from 3-methyl-2-oxobutanoate: step 2/4. In terms of biological role, catalyzes the isomerization between 2-isopropylmalate and 3-isopropylmalate, via the formation of 2-isopropylmaleate. The sequence is that of 3-isopropylmalate dehydratase small subunit from Lachnospira eligens (strain ATCC 27750 / DSM 3376 / VPI C15-48 / C15-B4) (Eubacterium eligens).